The following is a 254-amino-acid chain: UstYa family oxidase phomYc' (254 aa).

A helical membrane pass occupies residues 38-58 (LVLVLQSVLIISLLASLHILG). N-linked (GlcNAc...) asparagine glycosylation is present at asparagine 64. An HXXHC 1 motif is present at residues 138-142 (HQLHC). Asparagine 159 is a glycosylation site (N-linked (GlcNAc...) asparagine). An HXXHC 2 motif is present at residues 173–177 (HIDHC).

It belongs to the ustYa family.

Its subcellular location is the membrane. It participates in mycotoxin biosynthesis. In terms of biological role, ustYa family oxidase; part of the gene cluster that mediates the biosynthesis of the phomopsins, a group of hexapeptide mycotoxins which infects lupins and causes lupinosis disease in livestock. Within the pathway, phomYc' catalyzes the desaturation of the Ile moiety into 2,3-dehydroisoleucine (dIle). The pathway starts with the processing of the precursor phomA' by several endopeptidases including kexin proteases as well as the cluster-specific S41 family peptidase phomP1 and the oligopeptidase phomG' to produce 10 identical copies of the hexapeptide Tyr-Val-Ile-Pro-Ile-Asp. After being excised from the precursor peptide, the core peptides are cyclized and modified post-translationally by enzymes encoded within the gene cluster. The timing and order of proteolysis of the phomA' precursor and PTMs are still unknown. Two tyrosinase-like enzymes, phomQ1' and phomQ2, catalyze the chlorination and hydroxylation of Tyr, respectively. PhomYb, is proposed to be involved in the construction of the macrocyclic structure. The other 4 ustYa family proteins may be involved in PTMs that generate the unique structure of phomopsin A. PhomYa' is required for the hydroxylation of C-beta of Tyr. PhomYc', phomYd', and phomYe are responsible for the biosynthesis of 2,3-dehydroisoleucine (dIle), 2,3-dehydroaspartic acid (dAsp), and 3,4-dehydroproline (dPro), respectively. While dIle formation by phomYc' is indispensable for the installation of dAsp by phomYd', the order of the other PTMs have not been elucidated yet. Most of the biosynthetic enzymes likely have broad substrate specificity, and thus, there might be a metabolic grid from a precursor to phomopsin A. The enzyme(s) responsible for the biosynthesis of 3,4-dehydrovaline (dVal) have also not been identified yet. Finally, phomM' acts as an S-adenosylmethionine-dependent alpha-N-methyltransferase that catalyzes two successive N-methylation reactions, converting N-desmethyl-phomopsin A to phomopsin A and phomopsin A further to an N,N-dimethylated congener called phomopsin E. This Diaporthe leptostromiformis (Lupinosis disease fungus) protein is UstYa family oxidase phomYc'.